The following is a 696-amino-acid chain: D-(-)-3-hydroxybutyrate oligomer hydrolase (696 aa).

A signal peptide spans 1–20; sequence MTRLGWGRRMVFGAALAAVA. Residue S309 is the Charge relay system of the active site.

Belongs to the D-(-)-3-hydroxybutyrate oligomer hydrolase family.

Its subcellular location is the secreted. It carries out the reaction (3R)-hydroxybutanoate dimer + H2O = 2 (R)-3-hydroxybutanoate + H(+). Its pathway is lipid metabolism; butanoate metabolism. Functionally, participates in the degradation of poly-3-hydroxybutyrate (PHB). It works downstream of poly(3-hydroxybutyrate) depolymerase, hydrolyzing D(-)-3-hydroxybutyrate oligomers of various length (3HB-oligomers) into 3HB-monomers. The protein is D-(-)-3-hydroxybutyrate oligomer hydrolase of Burkholderia lata (strain ATCC 17760 / DSM 23089 / LMG 22485 / NCIMB 9086 / R18194 / 383).